The chain runs to 661 residues: UvrABC system protein C (661 aa).

The region spanning 52-130 (HKPGVYRMVD…IKRLHPRFNV (79 aa)) is the GIY-YIG domain. Positions 240–275 (QSIKNDMVQAMHKAAKNFDFEQAAAYRDRLSALSHI) constitute a UVR domain.

Belongs to the UvrC family. As to quaternary structure, interacts with UvrB in an incision complex.

It is found in the cytoplasm. In terms of biological role, the UvrABC repair system catalyzes the recognition and processing of DNA lesions. UvrC both incises the 5' and 3' sides of the lesion. The N-terminal half is responsible for the 3' incision and the C-terminal half is responsible for the 5' incision. The sequence is that of UvrABC system protein C from Bartonella henselae (strain ATCC 49882 / DSM 28221 / CCUG 30454 / Houston 1) (Rochalimaea henselae).